The primary structure comprises 98 residues: NADH-ubiquinone oxidoreductase chain 4L (98 aa).

3 consecutive transmembrane segments (helical) span residues 1-21 (MPVV…GLLV), 29-49 (SLLC…VTVL), and 61-81 (IILL…LVMV).

It belongs to the complex I subunit 4L family. In terms of assembly, core subunit of respiratory chain NADH dehydrogenase (Complex I) which is composed of 45 different subunits.

The protein resides in the mitochondrion inner membrane. It catalyses the reaction a ubiquinone + NADH + 5 H(+)(in) = a ubiquinol + NAD(+) + 4 H(+)(out). In terms of biological role, core subunit of the mitochondrial membrane respiratory chain NADH dehydrogenase (Complex I) which catalyzes electron transfer from NADH through the respiratory chain, using ubiquinone as an electron acceptor. Part of the enzyme membrane arm which is embedded in the lipid bilayer and involved in proton translocation. The chain is NADH-ubiquinone oxidoreductase chain 4L (MT-ND4L) from Ursus arctos (Brown bear).